Reading from the N-terminus, the 87-residue chain is Small ribosomal subunit protein bS20 (87 aa).

The tract at residues 1 to 25 (MANIKSAKKRAVQSEKRRKHNASRR) is disordered.

Belongs to the bacterial ribosomal protein bS20 family.

In terms of biological role, binds directly to 16S ribosomal RNA. The chain is Small ribosomal subunit protein bS20 from Yersinia pseudotuberculosis serotype O:1b (strain IP 31758).